The sequence spans 399 residues: Lysosomal acid lipase/cholesteryl ester hydrolase (399 aa).

The signal sequence occupies residues 1 to 27 (MKMRFLGLVVCLVLWTLHSEGSGGKLT). A propeptide spans 28-76 (AVDPETNMNVSEIISYWGFPSEEYLVETEDGYILCLNRIPHGRKNHSDK) (removed in mature form). Residues Asn-36, Asn-72, Asn-101, and Asn-161 are each glycosylated (N-linked (GlcNAc...) asparagine). Residues 80-380 (PVVFLQHGLL…EWEHLDFIWG (301 aa)) enclose the AB hydrolase-1 domain. Ser-174 (charge relay system) is an active-site residue. Residues Asn-273 and Asn-321 are each glycosylated (N-linked (GlcNAc...) asparagine). The Charge relay system role is filled by His-374.

Belongs to the AB hydrolase superfamily. Lipase family. In terms of assembly, monomer. In terms of processing, glycosylation is not essential for catalytic activity. As to expression, most abundantly expressed in brain, lung, kidney and mammary gland, a moderate expression seen in placenta and expressed at low levels in the liver and heart.

The protein localises to the lysosome. The enzyme catalyses a sterol ester + H2O = a sterol + a fatty acid + H(+). The catalysed reaction is cholesteryl (9Z-octadecenoate) + H2O = cholesterol + (9Z)-octadecenoate + H(+). It catalyses the reaction a triacylglycerol + H2O = a 1,2-diacylglycerol + a fatty acid + H(+). It carries out the reaction 1,2-di-(9Z-octadecenoyl)-glycerol + (9Z)-octadecenoate + H(+) = 1,2,3-tri-(9Z-octadecenoyl)-glycerol + H2O. The enzyme catalyses a 1,2-diacylglycerol + H2O = a 1-acylglycerol + a fatty acid + H(+). The catalysed reaction is 1,2-di-(9Z-octadecenoyl)-glycerol + H2O = 1-(9Z-octadecenoyl)-glycerol + (9Z)-octadecenoate + H(+). It catalyses the reaction a 1,3-diacylglycerol + H2O = a 1-acylglycerol + a fatty acid + H(+). It carries out the reaction 1,3-di-(9Z-octadecenoyl)-glycerol + H2O = 1-(9Z-octadecenoyl)-glycerol + (9Z)-octadecenoate + H(+). In terms of biological role, catalyzes the deacylation of cholesteryl ester core lipids of endocytosed low density lipoproteins to generate free fatty acids and cholesterol. Hydrolyzes triglycerides (1,2,3-triacylglycerol) and diglycerides (such as 1,2-diacylglycerol and 1,3-diacylglycerol) with preference for the acyl moieties at the sn-1 or sn-3 positions. This is Lysosomal acid lipase/cholesteryl ester hydrolase (LIPA) from Homo sapiens (Human).